Here is a 159-residue protein sequence, read N- to C-terminus: SsrA-binding protein (159 aa).

Over residues 133–147 (KRQDLAKRDAQREMA) the composition is skewed to basic and acidic residues. Residues 133–159 (KRQDLAKRDAQREMARAAGRRSKGMDD) are disordered. The segment covering 150 to 159 (AGRRSKGMDD) has biased composition (basic residues).

It belongs to the SmpB family.

Its subcellular location is the cytoplasm. Its function is as follows. Required for rescue of stalled ribosomes mediated by trans-translation. Binds to transfer-messenger RNA (tmRNA), required for stable association of tmRNA with ribosomes. tmRNA and SmpB together mimic tRNA shape, replacing the anticodon stem-loop with SmpB. tmRNA is encoded by the ssrA gene; the 2 termini fold to resemble tRNA(Ala) and it encodes a 'tag peptide', a short internal open reading frame. During trans-translation Ala-aminoacylated tmRNA acts like a tRNA, entering the A-site of stalled ribosomes, displacing the stalled mRNA. The ribosome then switches to translate the ORF on the tmRNA; the nascent peptide is terminated with the 'tag peptide' encoded by the tmRNA and targeted for degradation. The ribosome is freed to recommence translation, which seems to be the essential function of trans-translation. This Salinispora arenicola (strain CNS-205) protein is SsrA-binding protein.